Consider the following 192-residue polypeptide: UPF0149 protein YE3397 (192 aa).

Belongs to the UPF0149 family.

The protein is UPF0149 protein YE3397 of Yersinia enterocolitica serotype O:8 / biotype 1B (strain NCTC 13174 / 8081).